We begin with the raw amino-acid sequence, 361 residues long: MRASCTPLKAPLRRPERLASSGRFAWVLLLAPLLLLPTSSDACDDPPRFVSMKPQGTLKPSYSPGEQIVYECHLGFQPVTPGQVLALVCQDNNTWSSLQEGCKKRRCPTLADPTNGQVILVNGSTEFGSEVHYVCNNGYYLLGTNISYCEVSSGTGVNWSDNPPTCEKILCQPPPEIQNGKYTNSHKDVFEYNEVVTYSCDPSNGPDEYSLVGESKLTCIGNGEWSSQPPQCKVVKCVYPAIEHGTIVSGFGPKYYYKATVVLKCNEGFNLYGNSVVVCGENSTWEPELPKCIKGHPPRPTDASPPNGAEGLGAGYIVLVIVAVLIGVGLLLCLYCCFCRQRKKGIYVTGESHRQDILFSL.

A signal peptide spans 1-42; sequence MRASCTPLKAPLRRPERLASSGRFAWVLLLAPLLLLPTSSDA. Sushi domains follow at residues 43–104, 105–168, 169–234, and 235–294; these read CDDP…GCKK, RRCP…TCEK, ILCQ…QCKV, and VKCV…KCIK. Residues 43-311 lie on the Extracellular side of the membrane; that stretch reads CDDPPRFVSM…DASPPNGAEG (269 aa). Cystine bridges form between Cys-107–Cys-149, Cys-135–Cys-166, Cys-171–Cys-219, Cys-200–Cys-232, Cys-237–Cys-279, and Cys-265–Cys-292. Asn-122 and Asn-145 each carry an N-linked (GlcNAc...) asparagine glycan. Thr-301 is a glycosylation site (O-linked (GalNAc...) threonine). A helical membrane pass occupies residues 312-332; it reads LGAGYIVLVIVAVLIGVGLLL. Residues 333–361 are Cytoplasmic-facing; sequence CLYCCFCRQRKKGIYVTGESHRQDILFSL. His-353 and Asp-356 each carry phosphotyrosine.

As to quaternary structure, interacts with C3b. Interacts with C4b. Interacts with moesin/MSN. Post-translationally, N-glycosylated. As to expression, highly expressed at the blood-brain barrier. Broadly expressed, with highest levels in thymus and spleen (at protein level).

It localises to the cytoplasmic vesicle. The protein localises to the secretory vesicle. The protein resides in the acrosome inner membrane. Functionally, acts as a cofactor for complement factor I, a serine protease which protects autologous cells against complement-mediated injury by cleaving C3b and C4b deposited on host tissue. May be involved in the fusion of the spermatozoa with the oocyte during fertilization. May act as a costimulatory factor for T-cells which induces the differentiation of CD4+ into T-regulatory 1 cells. T-regulatory 1 cells suppress immune responses by secreting interleukin-10, and therefore are thought to prevent autoimmunity. In case of bovine viral diarrhea virus (BVDV) infection, involved in virus attachment to cells. This Bos taurus (Bovine) protein is Membrane cofactor protein (CD46).